The primary structure comprises 481 residues: Cytochrome c oxidase subunit 1 (481 aa).

A helical transmembrane segment spans residues 22–42 (ISYLWLAYWFGMIGFYMSVLI). Ca(2+)-binding residues include Glu45 and Gly50. 8 helical membrane-spanning segments follow: residues 64 to 84 (LLFT…GLFG), 109 to 129 (SLLF…LEIG), 151 to 171 (FIIF…VNFI), 194 to 214 (IVLT…VFLM), 240 to 260 (LFWF…FGII), 278 to 298 (MILA…TSYV), 309 to 329 (YFTT…FNWV), and 343 to 363 (LVLF…TGVV). Position 69 (His69) interacts with Fe(II)-heme a. His246 provides a ligand contact to Cu cation. Positions 246–250 (HPEVY) form a cross-link, 1'-histidyl-3'-tyrosine (His-Tyr). Tyr250 is a binding site for O2. The Mg(2+) site is built by His374 and Asp375. His382 is a heme a3 binding site. 2 consecutive transmembrane segments (helical) span residues 382–402 (HFHF…IIYI) and 420–440 (IAPI…FTGF). His384 is a Fe(II)-heme a binding site. Residue Pro448 coordinates Ca(2+). The helical transmembrane segment at 459–479 (FICTLGATMMLVLKLAILFII) threads the bilayer.

This sequence belongs to the heme-copper respiratory oxidase family. Component of the cytochrome c oxidase (complex IV, CIV), a multisubunit enzyme composed of a catalytic core of 3 subunits and several supernumerary subunits. The complex exists as a monomer or a dimer and forms supercomplexes (SCs) in the inner mitochondrial membrane with ubiquinol-cytochrome c oxidoreductase (cytochrome b-c1 complex, complex III, CIII). Heme serves as cofactor. Cu cation is required as a cofactor.

It is found in the mitochondrion inner membrane. It catalyses the reaction 4 Fe(II)-[cytochrome c] + O2 + 8 H(+)(in) = 4 Fe(III)-[cytochrome c] + 2 H2O + 4 H(+)(out). It functions in the pathway energy metabolism; oxidative phosphorylation. Component of the cytochrome c oxidase, the last enzyme in the mitochondrial electron transport chain which drives oxidative phosphorylation. The respiratory chain contains 3 multisubunit complexes succinate dehydrogenase (complex II, CII), ubiquinol-cytochrome c oxidoreductase (cytochrome b-c1 complex, complex III, CIII) and cytochrome c oxidase (complex IV, CIV), that cooperate to transfer electrons derived from NADH and succinate to molecular oxygen, creating an electrochemical gradient over the inner membrane that drives transmembrane transport and the ATP synthase. Cytochrome c oxidase is the component of the respiratory chain that catalyzes the reduction of oxygen to water. Electrons originating from reduced cytochrome c in the intermembrane space (IMS) are transferred via the dinuclear copper A center (CU(A)) of subunit 2 and heme A of subunit 1 to the active site in subunit 1, a binuclear center (BNC) formed by heme A3 and copper B (CU(B)). The BNC reduces molecular oxygen to 2 water molecules using 4 electrons from cytochrome c in the IMS and 4 protons from the mitochondrial matrix. The sequence is that of Cytochrome c oxidase subunit 1 (MT-CO1) from Theileria parva (East coast fever infection agent).